The following is a 437-amino-acid chain: Zinc finger protein 491 (437 aa).

The segment at 35-59 adopts a C2H2-type 1; degenerate zinc-finger fold; that stretch reads KSCESGTCGEIFMGYSSFNRNIRTD. The C2H2-type 2; degenerate zinc-finger motif lies at 103 to 125; the sequence is FDCKECEKSFISPASIRRYMVTH. 11 consecutive C2H2-type zinc fingers follow at residues 131–153, 159–181, 187–209, 215–237, 243–265, 271–293, 299–321, 327–349, 355–377, 383–405, and 411–433; these read YKCKFCGKALDCLSLYLTHERTH, YECKQCGKAFSWHSSVRIHERTH, YECKECGKSFNFSSSFRRHERTH, YKCKECGKAFNCPSSFHRHERTH, YECKLYGKALSRLISFRRHMRMH, HKCKICGKAFYSPSSFQRHERSH, YKCKQCGKAFTCSTSFQYHERTH, DGCKQCGKAFRSAKYIRIHGRTH, YECKQCGKAFHCVSSFHRHERTH, YECKHCGKAFTCSIYIRIHERIH, and YQCKECGKAFIRSSYCRKHERTH.

Belongs to the krueppel C2H2-type zinc-finger protein family.

Its subcellular location is the nucleus. Functionally, may be involved in transcriptional regulation. The sequence is that of Zinc finger protein 491 (ZNF491) from Homo sapiens (Human).